A 96-amino-acid polypeptide reads, in one-letter code: Maintenance of carboxysome distribution protein B (96 aa).

The segment covering 1–18 (MTNLEDKLSASIKTENKD) has biased composition (basic and acidic residues). The disordered stretch occupies residues 1 to 96 (MTNLEDKLSA…STHPRRVWPD (96 aa)). Residues 59–74 (ARATTTKPAVSKSSKP) show a composition bias toward low complexity.

As to quaternary structure, monomer, associates with McdA:DNA. Interacts with shell components of the carboxysome.

The protein localises to the carboxysome. In terms of biological role, mcdA and McdB together mediate carboxysome positioning on the nucleoid and to prevent their aggregation in the cell. Undergoes liquid-liquid phase separation at pH 7.0 in the presence of crowders polyethylene glycol or Ficoll. McdA is an ATPase that forms dynamic gradients on the nucleoid in response to adapter protein McdB, which associates with carboxysomes. The interplay between McdA gradients on the nucleoid and McdB-bound carboxysomes result in the equal spacing of Cbs along the cell length. Stimulates the ATPase activity of McdA, causing McdA to be released from DNA. Incorrect positioning (aggregation) of carboxysomes results in reduced CO(2) fixation by encapsulated form 1 ribulose-1,5-bisphosphate carboxylase (RuBisCO, cbbL/cbbS), which leads to slower growth. This Halothiobacillus neapolitanus (strain ATCC 23641 / c2) (Thiobacillus neapolitanus) protein is Maintenance of carboxysome distribution protein B.